A 224-amino-acid chain; its full sequence is Protein GrpE (224 aa).

Residues 1 to 72 (MEKERDVAQE…KAKEEQNEEL (72 aa)) form a disordered region. Positions 10 to 19 (EQATYEQESP) are enriched in polar residues. Residues 20-67 (NAERQEELKENEHQEKNAPEEQEKVREENGRQDAQKDEIGDPEKAKEE) are compositionally biased toward basic and acidic residues.

It belongs to the GrpE family. In terms of assembly, homodimer.

It localises to the cytoplasm. Participates actively in the response to hyperosmotic and heat shock by preventing the aggregation of stress-denatured proteins, in association with DnaK and GrpE. It is the nucleotide exchange factor for DnaK and may function as a thermosensor. Unfolded proteins bind initially to DnaJ; upon interaction with the DnaJ-bound protein, DnaK hydrolyzes its bound ATP, resulting in the formation of a stable complex. GrpE releases ADP from DnaK; ATP binding to DnaK triggers the release of the substrate protein, thus completing the reaction cycle. Several rounds of ATP-dependent interactions between DnaJ, DnaK and GrpE are required for fully efficient folding. The polypeptide is Protein GrpE (Parageobacillus thermoglucosidasius (Geobacillus thermoglucosidasius)).